The sequence spans 238 residues: tRNA (guanine-N(7)-)-methyltransferase (238 aa).

The S-adenosyl-L-methionine site is built by Glu-68, Glu-93, Asp-120, and Asp-143. Residue Asp-143 is part of the active site. Residues Lys-147, Asp-179, and 216-219 each bind substrate; that span reads TKFE.

It belongs to the class I-like SAM-binding methyltransferase superfamily. TrmB family.

It carries out the reaction guanosine(46) in tRNA + S-adenosyl-L-methionine = N(7)-methylguanosine(46) in tRNA + S-adenosyl-L-homocysteine. The protein operates within tRNA modification; N(7)-methylguanine-tRNA biosynthesis. Functionally, catalyzes the formation of N(7)-methylguanine at position 46 (m7G46) in tRNA. In Shewanella woodyi (strain ATCC 51908 / MS32), this protein is tRNA (guanine-N(7)-)-methyltransferase.